Consider the following 67-residue polypeptide: uncharacterized protein (67 aa).

The helical transmembrane segment at 26 to 46 (CYLLFCFLECFLNLFKKCGVF) threads the bilayer.

It belongs to the plectrovirus ORF11 family.

The protein localises to the host membrane. This is an uncharacterized protein from Spiroplasma virus SpV1-C74 (SpV1).